The chain runs to 250 residues: Isoprenyl transferase (250 aa).

Asp26 is a catalytic residue. Asp26 serves as a coordination point for Mg(2+). Substrate contacts are provided by residues 27–30 (GNGR), Trp31, Arg39, His43, and 71–73 (STE). Asn74 (proton acceptor) is an active-site residue. Residues Trp75, Arg77, Arg198, and 204–206 (RLS) contribute to the substrate site. Glu217 contributes to the Mg(2+) binding site.

Belongs to the UPP synthase family. In terms of assembly, homodimer. Requires Mg(2+) as cofactor.

Catalyzes the condensation of isopentenyl diphosphate (IPP) with allylic pyrophosphates generating different type of terpenoids. The chain is Isoprenyl transferase from Streptococcus agalactiae serotype V (strain ATCC BAA-611 / 2603 V/R).